The chain runs to 335 residues: N-acetyl-gamma-glutamyl-phosphate reductase (335 aa).

Cysteine 156 is a catalytic residue.

This sequence belongs to the NAGSA dehydrogenase family. Type 1 subfamily.

It localises to the cytoplasm. The enzyme catalyses N-acetyl-L-glutamate 5-semialdehyde + phosphate + NADP(+) = N-acetyl-L-glutamyl 5-phosphate + NADPH + H(+). The protein operates within amino-acid biosynthesis; L-arginine biosynthesis; N(2)-acetyl-L-ornithine from L-glutamate: step 3/4. Its function is as follows. Catalyzes the NADPH-dependent reduction of N-acetyl-5-glutamyl phosphate to yield N-acetyl-L-glutamate 5-semialdehyde. This chain is N-acetyl-gamma-glutamyl-phosphate reductase, found in Aeromonas hydrophila subsp. hydrophila (strain ATCC 7966 / DSM 30187 / BCRC 13018 / CCUG 14551 / JCM 1027 / KCTC 2358 / NCIMB 9240 / NCTC 8049).